A 335-amino-acid chain; its full sequence is 3-hydroxyisobutyrate dehydrogenase, mitochondrial (335 aa).

The N-terminal 35 residues, 1-35 (MAASLGFRGAASGLWYWSGRRRPVGSLAAVCSRSM), are a transit peptide targeting the mitochondrion. 39-68 (TPVGFIGLGNMGNPMAKNLMKHGYPLILYD) lines the NAD(+) pocket. Lys59, Lys75, and Lys78 each carry N6-acetyllysine; alternate. An N6-succinyllysine; alternate mark is found at Lys59, Lys75, and Lys78. Lys94 carries the N6-succinyllysine modification. NAD(+)-binding positions include 102–103 (LP) and Asn107. Position 120 is an N6-acetyllysine (Lys120). Thr133 contacts NAD(+). The residue at position 140 (Lys140) is an N6-succinyllysine. Position 144 is an N6-acetyllysine (Lys144). Lys148 is subject to N6-acetyllysine; alternate. At Lys148 the chain carries N6-succinyllysine; alternate. Lys208 is an active-site residue. Lys237 and Lys241 each carry N6-acetyllysine; alternate. An N6-succinyllysine; alternate mark is found at Lys237 and Lys241. NAD(+) is bound at residue Lys283. Residue Lys296 is modified to N6-succinyllysine. Lys320 is modified (N6-acetyllysine; alternate). Lys320 carries the post-translational modification N6-succinyllysine; alternate.

The protein belongs to the HIBADH-related family. 3-hydroxyisobutyrate dehydrogenase subfamily. In terms of assembly, homodimer.

It localises to the mitochondrion. The enzyme catalyses 3-hydroxy-2-methylpropanoate + NAD(+) = 2-methyl-3-oxopropanoate + NADH + H(+). Its pathway is amino-acid degradation; L-valine degradation. This Mus musculus (Mouse) protein is 3-hydroxyisobutyrate dehydrogenase, mitochondrial (Hibadh).